The primary structure comprises 178 residues: Large ribosomal subunit protein uL6 (178 aa).

Belongs to the universal ribosomal protein uL6 family. Part of the 50S ribosomal subunit.

Its function is as follows. This protein binds to the 23S rRNA, and is important in its secondary structure. It is located near the subunit interface in the base of the L7/L12 stalk, and near the tRNA binding site of the peptidyltransferase center. The chain is Large ribosomal subunit protein uL6 from Streptococcus sanguinis (strain SK36).